Consider the following 363-residue polypeptide: MSSFDLKQRAVEWFSNLGIPTQIATFVWICVPIVVLILGITLGVLVLVWLERKISAAVQQRIGPEYAGPLGTIQALADGLKLILKEDIIPSRADKWLFALGPAIVVIPVLLSFLVIPFNHQLIVADISIGMFFWIAVSSVAPVGLLVAGYGSNNKYAFLGGLRAAAQSISYEIPLALCVLSVVLMSNSLSTIEIVEQQSRFGILGWNIWRQPVGFIAFVISALAECERLPFDLPEAEEELVAGYQTEYSGIKFGLFYVASYLNLFASSLFVTILYLGGWSPNISFEQVFNWEQGEQLFAVLDGLIAFAITLSKAYLFLFASILTRWTLPRVRMDQLLDLGWKFLLPVALGNLLLTASFELALL.

The next 8 helical transmembrane spans lie at 26–46 (FVWICVPIVVLILGITLGVLV), 96–116 (WLFALGPAIVVIPVLLSFLVI), 127–147 (ISIGMFFWIAVSSVAPVGLLV), 175–195 (LALCVLSVVLMSNSLSTIEIV), 203–223 (ILGWNIWRQPVGFIAFVISAL), 253–273 (FGLFYVASYLNLFASSLFVTI), 303–323 (GLIAFAITLSKAYLFLFASIL), and 343–363 (FLLPVALGNLLLTASFELALL).

It belongs to the complex I subunit 1 family. NDH is composed of at least 16 different subunits, 5 of which are encoded in the nucleus.

The protein resides in the plastid. It is found in the chloroplast thylakoid membrane. It carries out the reaction a plastoquinone + NADH + (n+1) H(+)(in) = a plastoquinol + NAD(+) + n H(+)(out). The catalysed reaction is a plastoquinone + NADPH + (n+1) H(+)(in) = a plastoquinol + NADP(+) + n H(+)(out). In terms of biological role, NDH shuttles electrons from NAD(P)H:plastoquinone, via FMN and iron-sulfur (Fe-S) centers, to quinones in the photosynthetic chain and possibly in a chloroplast respiratory chain. The immediate electron acceptor for the enzyme in this species is believed to be plastoquinone. Couples the redox reaction to proton translocation, and thus conserves the redox energy in a proton gradient. In Zygnema circumcarinatum (Green alga), this protein is NAD(P)H-quinone oxidoreductase subunit 1, chloroplastic.